A 137-amino-acid chain; its full sequence is Nucleoside diphosphate kinase (137 aa).

Positions 10, 58, 86, 92, 103, and 113 each coordinate ATP. Residue His116 is the Pros-phosphohistidine intermediate of the active site.

It belongs to the NDK family. In terms of assembly, homotetramer. Mg(2+) is required as a cofactor.

The protein resides in the cytoplasm. It carries out the reaction a 2'-deoxyribonucleoside 5'-diphosphate + ATP = a 2'-deoxyribonucleoside 5'-triphosphate + ADP. The catalysed reaction is a ribonucleoside 5'-diphosphate + ATP = a ribonucleoside 5'-triphosphate + ADP. Major role in the synthesis of nucleoside triphosphates other than ATP. The ATP gamma phosphate is transferred to the NDP beta phosphate via a ping-pong mechanism, using a phosphorylated active-site intermediate. In Helicobacter pylori (strain Shi470), this protein is Nucleoside diphosphate kinase.